Consider the following 216-residue polypeptide: Snake venom metalloproteinase HT-1 (216 aa).

A Disintegrin domain is found at 8 to 94 (PPVCGNELLE…DCPMDDFHRN (87 aa)). Residues Val-10, Asn-13, Leu-15, Glu-17, Glu-20, and Asp-23 each coordinate Ca(2+). 14 cysteine pairs are disulfide-bonded: Cys-11/Cys-40, Cys-22/Cys-35, Cys-24/Cys-30, Cys-34/Cys-57, Cys-48/Cys-54, Cys-53/Cys-79, Cys-66/Cys-86, Cys-73/Cys-105, Cys-98/Cys-110, Cys-117/Cys-167, Cys-132/Cys-178, Cys-145/Cys-155, Cys-162/Cys-204, and Cys-198/Cys-209. The D/ECD-tripeptide motif lies at 72 to 74 (ECD). Asn-175 carries N-linked (GlcNAc...) asparagine glycosylation.

It belongs to the venom metalloproteinase (M12B) family. P-III subfamily. P-IIIa sub-subfamily. As to quaternary structure, monomer. Zn(2+) serves as cofactor. In terms of tissue distribution, expressed by the venom gland.

The protein resides in the secreted. In terms of biological role, zinc protease from snake venom that induces hemorrhage. The polypeptide is Snake venom metalloproteinase HT-1 (Crotalus ruber ruber (Red diamond rattlesnake)).